The following is a 1130-amino-acid chain: Sodium/potassium/calcium exchanger 1 (1130 aa).

The Extracellular segment spans residues 1 to 419; that stretch reads MGKLIRMGTQ…DLFSVEDRRQ (419 aa). Positions 104–209 are disordered; the sequence is PSIAMEDTPN…SPTATVRDRE (106 aa). The span at 125 to 136 shows a compositional bias: polar residues; the sequence is LKNSYSPTTAGT. The segment covering 170-187 has biased composition (basic and acidic residues); that stretch reads PRGERKNSSPTHAREKGR. Residues N176 and N273 are each glycosylated (N-linked (GlcNAc...) asparagine). A disordered region spans residues 274–295; it reads ISTTPQGAVPQHTPATSEEQMT. Polar residues predominate over residues 286 to 295; that stretch reads TPATSEEQMT. Residues 420 to 440 traverse the membrane as a helical segment; that stretch reads GWVVLHIFGMMYVFVALAIVC. At 441 to 464 the chain is on the cytoplasmic side; sequence DEYFVPALGVITHKLQISEDVAGA. The Alpha-1 repeat unit spans residues 461–501; it reads VAGATFMAAGGSAPELFTSLIGVFISHSNVGIGTIVGSAVF. The chain crosses the membrane as a helical span at residues 465-485; that stretch reads TFMAAGGSAPELFTSLIGVFI. At 486 to 489 the chain is on the extracellular side; it reads SHSN. Residues 490–510 traverse the membrane as a helical segment; the sequence is VGIGTIVGSAVFNILFVIGTC. Over 511 to 530 the chain is Cytoplasmic; that stretch reads ALFSREILNLTWWPLFRDVS. The chain crosses the membrane as a helical span at residues 531–551; it reads FYILDLSMLIVFFLDSFIAWW. E552 is a topological domain (extracellular). Residues 553–573 traverse the membrane as a helical segment; it reads SLLLLLAYALYVFTMKWNKQI. The Cytoplasmic portion of the chain corresponds to 574–938; it reads ELWVKEQLSR…SLEWPDSRQK (365 aa). A disordered region spans residues 598–619; it reads PSEDAVEENEQQDSKKLKLPSV. Residue S625 is modified to Phosphoserine. Positions 650-932 are disordered; sequence GEARPSKDKQ…ENEEPLSLEW (283 aa). The span at 661-675 shows a compositional bias: polar residues; that stretch reads SLNQEARVLSQTKAE. Residue T690 is modified to Phosphothreonine. Over residues 703–715 the composition is skewed to acidic residues; that stretch reads QEDDPGCQEDVDE. The span at 730-751 shows a compositional bias: basic and acidic residues; the sequence is ETETEGKKDEQEGETEAERKED. 2 stretches are compositionally biased toward acidic residues: residues 766-782 and 802-820; these read GETEAEGKEDEQEGETE and QEGETEAEGKEDEQEGETE. A compositionally biased stretch (basic and acidic residues) spans 833-855; sequence AESKEVEQERETEAEGKDKHEGQ. 2 stretches are compositionally biased toward acidic residues: residues 870–880 and 896–928; these read GETEANAEDQC and DGGDSEEEEDEEDEEEEEEEDEEEEEEENEEPL. The helical transmembrane segment at 939-959 threads the bilayer; that stretch reads QAIYLFLLPIVFPLWLTIPDV. Over 960–966 the chain is Extracellular; the sequence is RRQESRK. The chain crosses the membrane as a helical span at residues 967 to 987; the sequence is FFVITFLGSIIWIAMFSYLMV. Residues 988 to 1002 lie on the Cytoplasmic side of the membrane; it reads WWAHQVGETIGISEE. A helical transmembrane segment spans residues 1003 to 1023; sequence IMGLTILAAGTSIPDLITSVI. One copy of the Alpha-2 repeat lies at 1010–1041; the sequence is AAGTSIPDLITSVIVARKGLGDMAVSSSVGSN. Residues 1024–1041 lie on the Extracellular side of the membrane; it reads VARKGLGDMAVSSSVGSN. The chain crosses the membrane as a helical span at residues 1042–1062; it reads IFDITVGLPVPWLLFSLINAL. At 1063–1070 the chain is on the cytoplasmic side; that stretch reads QPVPVSSN. A helical transmembrane segment spans residues 1071-1091; sequence GLFCAIVLLFLMLLFVIFSIA. Residues 1092 to 1099 are Extracellular-facing; sequence SCKWRMNK. Residues 1100 to 1120 form a helical membrane-spanning segment; it reads ILGFTMFLLYFVFLVISVMLE. Residues 1121 to 1130 are Cytoplasmic-facing; it reads DRIISCPVSV.

The protein belongs to the Ca(2+):cation antiporter (CaCA) (TC 2.A.19) family. SLC24A subfamily. The uncleaved signal sequence is required for efficient membrane targeting and proper membrane integration and topology.

The protein resides in the cell membrane. It carries out the reaction Ca(2+)(out) + K(+)(out) + 4 Na(+)(in) = Ca(2+)(in) + K(+)(in) + 4 Na(+)(out). In terms of biological role, calcium, potassium:sodium antiporter that transports 1 Ca(2+) and 1 K(+) in exchange for 4 Na(+). Critical component of the visual transduction cascade, controlling the calcium concentration of outer segments during light and darkness. Light causes a rapid lowering of cytosolic free calcium in the outer segment of both retinal rod and cone photoreceptors and the light-induced lowering of calcium is caused by extrusion via this protein which plays a key role in the process of light adaptation. This Mus musculus (Mouse) protein is Sodium/potassium/calcium exchanger 1.